Consider the following 43-residue polypeptide: Omega-ctenitoxin-Pr1a (43 aa).

4 disulfides stabilise this stretch: cysteine 2–cysteine 17, cysteine 9–cysteine 22, cysteine 16–cysteine 33, and cysteine 24–cysteine 31. Residue glycine 43 is modified to Glycine amide.

In terms of tissue distribution, expressed by the venom gland.

The protein localises to the secreted. Inhibits high-voltage activated calcium channels. Shifts the voltage-dependence for activation towards hyperpolarized membrane potentials for L- (Cav1), P/Q- (Cav2.1/CACNA1A) and R-type (Cav2.3/CACNA1E) calcium currents. Causes immediate agitation and clockwise gyration, followed by the gradual development of general flaccid paralysis when injected intracerebroventricular into mice at dose levels of 5 ug per mouse. This Phoneutria reidyi (Brazilian Amazonian armed spider) protein is Omega-ctenitoxin-Pr1a.